Reading from the N-terminus, the 718-residue chain is Protein Hook homolog 3 (718 aa).

Met1 is subject to N-acetylmethionine. Residues 1–164 form a sufficient for interaction with microtubules region; it reads MFNVESVERV…QELMSKESPV (164 aa). Residue Ser6 is modified to Phosphoserine. The Calponin-homology (CH) domain occupies 10–126; that stretch reads VELCESLLTW…RMLQLILGCA (117 aa). Coiled coils occupy residues 168 to 433 and 462 to 663; these read HDAY…VQAQ and EIRE…MEEK. Ser238 is subject to Phosphoserine. Positions 450–671 are sufficient for interaction with IIGP1; the sequence is SSDSLAAEIV…EKYIVSAWYN (222 aa). The tract at residues 553 to 718 is required for association with Golgi; sequence EKLHEANNEL…PGHVQPATAR (166 aa). Positions 682–718 are disordered; the sequence is EDRLASTGSGQSFLARQRQATSTRRSYPGHVQPATAR. Residues 687–706 are compositionally biased toward polar residues; sequence STGSGQSFLARQRQATSTRR. A phosphoserine mark is found at Ser693 and Ser707.

This sequence belongs to the hook family. As to quaternary structure, self-associates. Component of the FTS/Hook/FHIP complex (FHF complex), composed of AKTIP/FTS, FHIP1B, and one or more members of the Hook family of proteins HOOK1, HOOK2, and HOOK3. May interact directly with AKTIP/FTS, HOOK1 and HOOK2. Associates with several subunits of the homotypic vesicular sorting complex (the HOPS complex) including VPS16 and VPS41; these interactions may be indirect. Interacts with IIGP1. Interacts with MSR1, and this association is stimulated by ligand binding to MSR1. Interacts with microtubules. Part of a tripartite complex with dynein and dynactin, acts an adapter linking the dynein motor complex and dynactin. Interacts with dynein intermediate chain and dynactin (DCTN1). Interacts with CCDC181. Interacts with LRGUK. (Microbial infection) Interacts with Salmonella typhimurium spiC. In terms of tissue distribution, expressed in brain, cerebellum, heart, intestine, kidney, liver, lung, skeletal muscle, spleen and stomach (at protein level).

The protein resides in the cytoplasm. It localises to the cytoskeleton. It is found in the golgi apparatus. In terms of biological role, acts as an adapter protein linking the dynein motor complex to various cargos and converts dynein from a non-processive to a highly processive motor in the presence of dynactin. Facilitates the interaction between dynein and dynactin and activates dynein processivity (the ability to move along a microtubule for a long distance without falling off the track). Predominantly recruits 2 dyneins, which increases both the force and speed of the microtubule motor. Component of the FTS/Hook/FHIP complex (FHF complex). The FHF complex may function to promote vesicle trafficking and/or fusion via the homotypic vesicular protein sorting complex (the HOPS complex). May regulate clearance of endocytosed receptors such as MSR1. Participates in defining the architecture and localization of the Golgi complex. FHF complex promotes the distribution of AP-4 complex to the perinuclear area of the cell. (Microbial infection) Serves as a target for the spiC protein from Salmonella typhimurium, which inactivates it, leading to a strong alteration in cellular trafficking. This chain is Protein Hook homolog 3 (Hook3), found in Mus musculus (Mouse).